Reading from the N-terminus, the 582-residue chain is Zinc finger protein 319 (582 aa).

Over residues 1 to 14 (MSESWQQPPQTQPQ) the composition is skewed to low complexity. The tract at residues 1–39 (MSESWQQPPQTQPQQPQPPQPQHHAEPPPALAEHTLPPG) is disordered. A C2H2-type 1 zinc finger spans residues 76 to 100 (PKCGVCGHDLAHLSSPHEHQCLAGH). The C2H2-type 2; degenerate zinc-finger motif lies at 104 to 126 (FQCTQCLKIFHQATDLLEHQCVQ). Lysine 130 is covalently cross-linked (Glycyl lysine isopeptide (Lys-Gly) (interchain with G-Cter in SUMO2)). The segment at 132–154 (FVCGVCKMGFSLLTSLAQHHSSH) adopts a C2H2-type 3 zinc-finger fold. A compositionally biased stretch (low complexity) spans 174 to 196 (EPATTAAPSLPAAPAPSTVTPAE). Residues 174–198 (EPATTAAPSLPAAPAPSTVTPAEQA) are disordered. 3 C2H2-type zinc fingers span residues 202–224 (YSCP…ERIH), 230–252 (YKCT…KRTH), and 258–280 (YKCA…MYAH). Serine 281 bears the Phosphoserine mark. The C2H2-type 7; degenerate zinc finger occupies 287–309 (FRCNVCELHFKESSELLQHPCTP). C2H2-type zinc fingers lie at residues 315 to 337 (FRCG…ERTH), 343 to 365 (FKCD…RRTH), and 371 to 393 (FKCG…QHVH). The C2H2-type 11; degenerate zinc finger occupies 399 to 421 (FKCPVCQKGFDQSAELLRHKCLP). Residues 428–450 (FKCPVCNKAYKRASALQKHQLAH) form a C2H2-type 12 zinc finger. The C2H2-type 13; degenerate zinc finger occupies 458–480 (LRCTLCERRFFSSSEFVQHRCDP). C2H2-type zinc fingers lie at residues 486–508 (LKCP…RRVH), 514–536 (YKCP…QGVH), and 542–564 (FKCV…SAQH).

It belongs to the krueppel C2H2-type zinc-finger protein family.

It localises to the nucleus. Its function is as follows. May be involved in transcriptional regulation. This chain is Zinc finger protein 319 (ZNF319), found in Homo sapiens (Human).